The sequence spans 322 residues: Acetyl-coenzyme A carboxylase carboxyl transferase subunit alpha (322 aa).

The CoA carboxyltransferase C-terminal domain occupies 30–293 (ALDISAEITR…RQALQESLRK (264 aa)).

This sequence belongs to the AccA family. In terms of assembly, acetyl-CoA carboxylase is a heterohexamer composed of biotin carboxyl carrier protein (AccB), biotin carboxylase (AccC) and two subunits each of ACCase subunit alpha (AccA) and ACCase subunit beta (AccD).

It localises to the cytoplasm. The enzyme catalyses N(6)-carboxybiotinyl-L-lysyl-[protein] + acetyl-CoA = N(6)-biotinyl-L-lysyl-[protein] + malonyl-CoA. It functions in the pathway lipid metabolism; malonyl-CoA biosynthesis; malonyl-CoA from acetyl-CoA: step 1/1. In terms of biological role, component of the acetyl coenzyme A carboxylase (ACC) complex. First, biotin carboxylase catalyzes the carboxylation of biotin on its carrier protein (BCCP) and then the CO(2) group is transferred by the carboxyltransferase to acetyl-CoA to form malonyl-CoA. The chain is Acetyl-coenzyme A carboxylase carboxyl transferase subunit alpha from Nitrosomonas eutropha (strain DSM 101675 / C91 / Nm57).